A 158-amino-acid chain; its full sequence is MADEALFLLLHNEMVSGVYKSAEQGEVENGRCVTKLESMGFRVGQGLIERFTKDTARFKDELDIMKFICKDFWTTVFKKQIDNLRTNHQGIYVLQDNKFRLLIQLSAGKQYLEHASKYLAFTCGLIRGGLSNLGIKSIVTAEVSSMPACKFQVMIQKL.

The protein belongs to the TRAPP small subunits family. BET3 subfamily. Homodimer. Part of a TRAPP complex. Heterodimer with TRAPPC3. The heterodimer TRAPPC6B-TRAPPC3 interacts with TRAPPC1 likely providing a core for TRAPP complex formation. Widely expressed. Expressed in lung, heart, liver, spleen, brain and kidney.

It is found in the golgi apparatus. The protein resides in the cis-Golgi network. It localises to the endoplasmic reticulum. Functionally, component of a transport protein particle (TRAPP) complex that may function in specific stages of inter-organelle traffic. Specifically involved in the early development of neural circuitry, likely by controlling the frequency and amplitude of intracellular calcium transients implicated in the regulation of neuron differentiation and survival. The chain is Trafficking protein particle complex subunit 6B from Mus musculus (Mouse).